The primary structure comprises 634 residues: Chaperone protein HtpG (634 aa).

Residues 1–344 form an a; substrate-binding region; sequence MSETATQNKE…SNDLPLNVSR (344 aa). Residues 345–561 are b; that stretch reads EILQDNKVTQ…DFEMGTQMAK (217 aa). The tract at residues 562–634 is c; the sequence is LLEAAGQAAP…GAINELLTKR (73 aa).

Belongs to the heat shock protein 90 family. As to quaternary structure, homodimer.

The protein localises to the cytoplasm. Molecular chaperone. Has ATPase activity. The sequence is that of Chaperone protein HtpG from Vibrio atlanticus (strain LGP32) (Vibrio splendidus (strain Mel32)).